Consider the following 450-residue polypeptide: Tubulin alpha-1 chain (450 aa).

GTP is bound by residues Q11, E71, G144, T145, T179, N206, and N228. A Mg(2+)-binding site is contributed by E71. E254 is a catalytic residue. T349 is modified (phosphothreonine). The disordered stretch occupies residues 431–450 (DYEEVGGEGAEDDDEEGDEY).

This sequence belongs to the tubulin family. Dimer of alpha and beta chains. A typical microtubule is a hollow water-filled tube with an outer diameter of 25 nm and an inner diameter of 15 nM. Alpha-beta heterodimers associate head-to-tail to form protofilaments running lengthwise along the microtubule wall with the beta-tubulin subunit facing the microtubule plus end conferring a structural polarity. Microtubules usually have 13 protofilaments but different protofilament numbers can be found in some organisms and specialized cells. It depends on Mg(2+) as a cofactor. Post-translationally, undergoes a tyrosination/detyrosination cycle, the cyclic removal and re-addition of a C-terminal tyrosine residue by the enzymes tubulin tyrosine carboxypeptidase (TTCP) and tubulin tyrosine ligase (TTL), respectively.

It localises to the cytoplasm. Its subcellular location is the cytoskeleton. It catalyses the reaction GTP + H2O = GDP + phosphate + H(+). Tubulin is the major constituent of microtubules, a cylinder consisting of laterally associated linear protofilaments composed of alpha- and beta-tubulin heterodimers. Microtubules grow by the addition of GTP-tubulin dimers to the microtubule end, where a stabilizing cap forms. Below the cap, tubulin dimers are in GDP-bound state, owing to GTPase activity of alpha-tubulin. This chain is Tubulin alpha-1 chain (TUBA1), found in Arabidopsis thaliana (Mouse-ear cress).